The chain runs to 311 residues: Methionyl-tRNA formyltransferase (311 aa).

110 to 113 (SLLP) is a binding site for (6S)-5,6,7,8-tetrahydrofolate.

It belongs to the Fmt family.

The enzyme catalyses L-methionyl-tRNA(fMet) + (6R)-10-formyltetrahydrofolate = N-formyl-L-methionyl-tRNA(fMet) + (6S)-5,6,7,8-tetrahydrofolate + H(+). Its function is as follows. Attaches a formyl group to the free amino group of methionyl-tRNA(fMet). The formyl group appears to play a dual role in the initiator identity of N-formylmethionyl-tRNA by promoting its recognition by IF2 and preventing the misappropriation of this tRNA by the elongation apparatus. This is Methionyl-tRNA formyltransferase from Streptococcus pyogenes serotype M18 (strain MGAS8232).